Consider the following 123-residue polypeptide: Small ribosomal subunit protein uS12 (123 aa).

Aspartate 89 carries the post-translational modification 3-methylthioaspartic acid.

It belongs to the universal ribosomal protein uS12 family. In terms of assembly, part of the 30S ribosomal subunit. Contacts proteins S8 and S17. May interact with IF1 in the 30S initiation complex.

Its function is as follows. With S4 and S5 plays an important role in translational accuracy. In terms of biological role, interacts with and stabilizes bases of the 16S rRNA that are involved in tRNA selection in the A site and with the mRNA backbone. Located at the interface of the 30S and 50S subunits, it traverses the body of the 30S subunit contacting proteins on the other side and probably holding the rRNA structure together. The combined cluster of proteins S8, S12 and S17 appears to hold together the shoulder and platform of the 30S subunit. The protein is Small ribosomal subunit protein uS12 of Mesorhizobium japonicum (strain LMG 29417 / CECT 9101 / MAFF 303099) (Mesorhizobium loti (strain MAFF 303099)).